We begin with the raw amino-acid sequence, 182 residues long: Endoribonuclease YbeY (182 aa).

3 residues coordinate Zn(2+): His120, His124, and His130. The segment at 157–182 (RGVSFAPKPTGAGAFPSAADRDDTQN) is disordered.

Belongs to the endoribonuclease YbeY family. It depends on Zn(2+) as a cofactor.

The protein resides in the cytoplasm. Single strand-specific metallo-endoribonuclease involved in late-stage 70S ribosome quality control and in maturation of the 3' terminus of the 16S rRNA. The sequence is that of Endoribonuclease YbeY from Corynebacterium jeikeium (strain K411).